The sequence spans 62 residues: Photosystem II reaction center X protein (62 aa).

A helical membrane pass occupies residues 26–46; it reads IASFFAAALLIVIPAAAFLIF.

The protein belongs to the PsbX family. Type 2 subfamily. In terms of assembly, PSII consists of a core antenna complex that captures photons, and an electron transfer chain that converts photonic excitation into a charge separation. PSII forms dimeric complexes.

The protein resides in the cellular thylakoid membrane. Functionally, involved in the binding and/or turnover of quinones at the Q(B) site of Photosystem II. The chain is Photosystem II reaction center X protein from Prochlorococcus marinus subsp. pastoris (strain CCMP1986 / NIES-2087 / MED4).